The following is a 319-amino-acid chain: NADH-quinone oxidoreductase subunit H 2 (319 aa).

9 helical membrane passes run 1–21 (MIGM…LLVL), 77–97 (ILAP…VAIG), 107–127 (VGLL…VLGA), 147–167 (LAYE…AGSF), 179–199 (VWFV…GIAA), 214–234 (LIAG…FLGE), 238–258 (VLLV…GPWL), 262–282 (VWFG…RATL), and 293–313 (FAWK…GIVV).

Belongs to the complex I subunit 1 family. As to quaternary structure, NDH-1 is composed of 14 different subunits. Subunits NuoA, H, J, K, L, M, N constitute the membrane sector of the complex.

The protein resides in the cell inner membrane. The enzyme catalyses a quinone + NADH + 5 H(+)(in) = a quinol + NAD(+) + 4 H(+)(out). In terms of biological role, NDH-1 shuttles electrons from NADH, via FMN and iron-sulfur (Fe-S) centers, to quinones in the respiratory chain. The immediate electron acceptor for the enzyme in this species is believed to be ubiquinone. Couples the redox reaction to proton translocation (for every two electrons transferred, four hydrogen ions are translocated across the cytoplasmic membrane), and thus conserves the redox energy in a proton gradient. This subunit may bind ubiquinone. The chain is NADH-quinone oxidoreductase subunit H 2 from Rhodopseudomonas palustris (strain ATCC BAA-98 / CGA009).